Here is a 323-residue protein sequence, read N- to C-terminus: D-alanine--D-alanine ligase (323 aa).

Positions K105 to E305 constitute an ATP-grasp domain. P131–T188 contacts ATP. Mg(2+)-binding residues include D256, E272, and N274.

This sequence belongs to the D-alanine--D-alanine ligase family. The cofactor is Mg(2+). Mn(2+) serves as cofactor.

Its subcellular location is the cytoplasm. The catalysed reaction is 2 D-alanine + ATP = D-alanyl-D-alanine + ADP + phosphate + H(+). The protein operates within cell wall biogenesis; peptidoglycan biosynthesis. In terms of biological role, cell wall formation. In Erythrobacter litoralis (strain HTCC2594), this protein is D-alanine--D-alanine ligase.